The following is a 136-amino-acid chain: Selenoprotein M (136 aa).

The first 19 residues, 1 to 19, serve as a signal peptide directing secretion; the sequence is MWLPLPLLLGLLQLQPILS. Active-site nucleophile residues include Cys38 and Sec41. Residues 38 to 41 constitute a cross-link (cysteinyl-selenocysteine (Cys-Sec)); it reads CGGU. Position 41 (Sec41) is a non-standard amino acid, selenocysteine. Residues 111–136 form a disordered region; that stretch reads SSPDAPVPAEFKMAPARASGDTKEDL. Positions 133-136 match the Prevents secretion from ER motif; the sequence is KEDL.

It belongs to the selenoprotein M/F family.

The protein localises to the endoplasmic reticulum. May function as a thiol-disulfide oxidoreductase that participates in disulfide bond formation. The polypeptide is Selenoprotein M (selenom) (Xenopus laevis (African clawed frog)).